The sequence spans 388 residues: Cystathionine gamma-synthase (388 aa).

Lys-208 carries the N6-(pyridoxal phosphate)lysine modification.

Belongs to the trans-sulfuration enzymes family. As to quaternary structure, homotetramer. Requires pyridoxal 5'-phosphate as cofactor.

Its subcellular location is the cytoplasm. The catalysed reaction is O-succinyl-L-homoserine + L-cysteine = L,L-cystathionine + succinate + H(+). In terms of biological role, catalyzes the formation of L-cystathionine from O-succinyl-L-homoserine (OSHS) and L-cysteine, via a gamma-replacement reaction. In the absence of thiol, catalyzes gamma-elimination to form 2-oxobutanoate, succinate and ammonia. This Mycobacterium leprae (strain TN) protein is Cystathionine gamma-synthase (metB).